A 399-amino-acid polypeptide reads, in one-letter code: Serine/threonine-protein kinase PKZ1 (399 aa).

The disordered stretch occupies residues 30-50 (PMQCAYQTQSHSNPEGAKRGR). A Protein kinase domain is found at 92–371 (WQLFDQIGAG…ADQMLQHPWM (280 aa)). ATP-binding positions include 98-106 (IGAGAFGVV) and lysine 121. The Proton acceptor role is filled by aspartate 219.

Belongs to the protein kinase superfamily. CAMK Ser/Thr protein kinase family. In terms of assembly, interacts with BZP1.

It carries out the reaction L-seryl-[protein] + ATP = O-phospho-L-seryl-[protein] + ADP + H(+). The enzyme catalyses L-threonyl-[protein] + ATP = O-phospho-L-threonyl-[protein] + ADP + H(+). Its function is as follows. May regulate an early stage of the zoospore pathway. The polypeptide is Serine/threonine-protein kinase PKZ1 (Phytophthora infestans (Potato late blight agent)).